Here is a 100-residue protein sequence, read N- to C-terminus: DNA base-flipping protein (100 aa).

Belongs to the MGMT family. ATL subfamily.

Involved in DNA damage recognition. Binds DNA containing O(6)-methylguanine. Binds to the damaged base and flips the base out of the DNA duplex into an extrahelical conformation, which allows processing by repair proteins. The polypeptide is DNA base-flipping protein (Vibrio parahaemolyticus serotype O3:K6 (strain AQ3810)).